Consider the following 527-residue polypeptide: Protein IQ-DOMAIN 4 (527 aa).

The interval Cys13–Ala90 is disordered. Basic and acidic residues predominate over residues Gly17 to Glu26. The segment covering Pro63 to Ala90 has biased composition (pro residues). An IQ domain is found at Glu147–Arg175. The calmodulin-binding stretch occupies residues Arg256–Tyr273. The segment at Val323–Ser527 is disordered. Positions Ile335–Asp360 are enriched in polar residues. Positions Thr361–Asn370 are enriched in basic and acidic residues. Polar residues-rich tracts occupy residues Leu399–Thr422 and Asn437–Asn455. Basic and acidic residues predominate over residues Pro471 to Lys481. Positions Asp478 to Met485 match the Nuclear localization signal motif.

The protein belongs to the IQD family. As to quaternary structure, binds to multiple calmodulin (CaM) in the presence of Ca(2+) and CaM-like proteins.

Its subcellular location is the nucleus. It localises to the nucleolus. Functionally, may be involved in cooperative interactions with calmodulins or calmodulin-like proteins. Recruits calmodulin proteins to microtubules, thus being a potential scaffold in cellular signaling and trafficking. May associate with nucleic acids and regulate gene expression at the transcriptional or post-transcriptional level. The protein is Protein IQ-DOMAIN 4 of Arabidopsis thaliana (Mouse-ear cress).